Here is a 261-residue protein sequence, read N- to C-terminus: Syntaxin-7 (261 aa).

At S2 the chain carries N-acetylserine. Residues 2 to 238 (SYTPGIGGDS…DYQRKSRKTL (237 aa)) are Cytoplasmic-facing. Phosphothreonine is present on T4. Residue S45 is modified to Phosphoserine. Residues 47 to 68 (ELRQLLQQKQQYTNQLAKETDK) are a coiled coil. A Phosphoserine modification is found at S75. T79 is modified (phosphothreonine). A phosphoserine mark is found at S125, S126, S129, and S205. The tract at residues 128 to 148 (VSGGFPEDSSKEKNLVSWESQ) is disordered. The t-SNARE coiled-coil homology domain maps to 165–227 (LRLIHERESS…QQANQQLSRA (63 aa)). A helical; Anchor for type IV membrane protein transmembrane segment spans residues 239–259 (CIIIFILVVRIVIICLIVWGL). Residues 260–261 (KG) lie on the Vesicular side of the membrane.

It belongs to the syntaxin family. As to quaternary structure, interacts with VPS11, VPS16 and VPS18. Interacts with VPS33A. Forms a SNARE complex with VTI1B, STX8 and VAMP8 which functions in the homotypic fusion of late endosomes. Component of the SNARE complex composed of STX7, STX8, VAMP7 and VTI1B that is required for heterotypic fusion of late endosomes with lysosomes. Interacts with TPC1.

Its subcellular location is the early endosome membrane. In terms of biological role, may be involved in protein trafficking from the plasma membrane to the early endosome (EE) as well as in homotypic fusion of endocytic organelles. Mediates the endocytic trafficking from early endosomes to late endosomes and lysosomes. In Mus musculus (Mouse), this protein is Syntaxin-7 (Stx7).